A 289-amino-acid polypeptide reads, in one-letter code: Dihydropteroate synthase (289 aa).

Positions 28–282 constitute a Pterin-binding domain; that stretch reads TYVMGILNTT…DVEAMAQICK (255 aa). Asn-35 serves as a coordination point for Mg(2+). (7,8-dihydropterin-6-yl)methyl diphosphate contacts are provided by residues Thr-75, Asp-109, Asn-128, Asp-199, Lys-235, and 270–272; that span reads RVH.

It belongs to the DHPS family. Mg(2+) serves as cofactor.

It catalyses the reaction (7,8-dihydropterin-6-yl)methyl diphosphate + 4-aminobenzoate = 7,8-dihydropteroate + diphosphate. The protein operates within cofactor biosynthesis; tetrahydrofolate biosynthesis; 7,8-dihydrofolate from 2-amino-4-hydroxy-6-hydroxymethyl-7,8-dihydropteridine diphosphate and 4-aminobenzoate: step 1/2. In terms of biological role, catalyzes the condensation of para-aminobenzoate (pABA) with 6-hydroxymethyl-7,8-dihydropterin diphosphate (DHPt-PP) to form 7,8-dihydropteroate (H2Pte), the immediate precursor of folate derivatives. This is Dihydropteroate synthase (folP) from Synechocystis sp. (strain ATCC 27184 / PCC 6803 / Kazusa).